We begin with the raw amino-acid sequence, 321 residues long: Cytochrome c biogenesis protein CcsA (321 aa).

8 helical membrane passes run 17-37 (VVSIVITIHLITLLVDEIIGL), 46-63 (MTTFFCITGLLMTRWIYL), 71-91 (LYESLIFLSWSFSIIHMVPYF), 98-118 (LKAITAPSAIFTQGFATSGLL), 143-163 (MVLGYAALLCGSLLSLALLVI), 225-245 (IISLGFIFLTIGILSGAVWAN), 259-273 (TWAFITWTLFSIYLH), and 286-306 (AIVASMGFLIIWICYFGVNLL).

This sequence belongs to the CcmF/CycK/Ccl1/NrfE/CcsA family. As to quaternary structure, may interact with Ccs1.

It is found in the plastid. Its subcellular location is the chloroplast thylakoid membrane. Functionally, required during biogenesis of c-type cytochromes (cytochrome c6 and cytochrome f) at the step of heme attachment. The sequence is that of Cytochrome c biogenesis protein CcsA from Morus indica (Mulberry).